The following is a 62-amino-acid chain: MATKIKFKYKGQDLEVDISKVKKVWKVGKMVSFTYDDNGKTGRGAVSEKDAPKELLNMIGKK.

Belongs to the 7 kDa DNA-binding/endoribonuclease P2 family. Monomer.

It is found in the cytoplasm. Functionally, can constrain negative DNA supercoils. May be involved in maintaining the integrity of the genome at high temperature. The protein is DNA-binding protein 7 of Metallosphaera sedula (strain ATCC 51363 / DSM 5348 / JCM 9185 / NBRC 15509 / TH2).